The sequence spans 66 residues: MSLKWTDVLEIAIQLDESKPEVDPRYVNFVDLRRWVVELPEFSDDPQRSGEKVLEAIQAAWIEERD.

To E.coli YfhJ.

This is an uncharacterized protein from Pseudomonas aeruginosa (strain ATCC 15692 / DSM 22644 / CIP 104116 / JCM 14847 / LMG 12228 / 1C / PRS 101 / PAO1).